Reading from the N-terminus, the 322-residue chain is Retinal homeobox protein Rx-A (322 aa).

The Octapeptide motif motif lies at 32–39 (HSIEAILG). The span at 75–87 (TEEIHPQQEHLED) shows a compositional bias: basic and acidic residues. The tract at residues 75-136 (TEEIHPQQEH…KKKHRRNRTT (62 aa)) is disordered. The segment covering 100-117 (KTSSECLSPGLSTSNSDN) has biased composition (polar residues). A DNA-binding region (homeobox) is located at residues 130 to 189 (HRRNRTTFTTYQLHELERAFEKSHYPDVYSREELAMKVNLPEVRVQVWFQNRRAKWRRQE). The short motif at 302–315 (NSIASLRMKAKEHI) is the OAR element. The Nuclear localization signal signature appears at 308-312 (RMKAK).

It belongs to the paired homeobox family. Bicoid subfamily. As to expression, highly expressed in anterior neural plate followed by neural retina, pigmented epithelium, in pineal gland, diencephalon floor and epiphysis. At later stages, the neuroretina remains the primary site of expression. No expression in the developing lens and cornea.

It is found in the nucleus. In terms of biological role, plays a critical role in eye formation by regulating the initial specification of retinal cells and/or their subsequent proliferation. This chain is Retinal homeobox protein Rx-A (rax-a), found in Xenopus laevis (African clawed frog).